The primary structure comprises 264 residues: Apolipoprotein A-I (264 aa).

A signal peptide spans 1 to 18; sequence MKAVVLALAVLFLTGSQA. Repeat copies occupy residues 67 to 88 and 89 to 110. Residues 67-264 form a 10 X approximate tandem repeats region; it reads LHLLDNWDTL…DEASKKLNAQ (198 aa). The residue at position 109 (Met-109) is a Methionine sulfoxide. The 3; half-length repeat unit spans residues 111-121; the sequence is KDLEEVKVKVQ. Repeat copies occupy residues 122-143, 144-165, 166-187, 188-207, and 208-229. The stretch at 230-240 is one 9; half-length repeat; it reads PALEDLRQGLM. Repeat unit 10 spans residues 241 to 264; it reads PVLENLKTTVLAAIDEASKKLNAQ.

This sequence belongs to the apolipoprotein A1/A4/E family. In terms of assembly, homodimer. Interacts with APOA1BP and CLU. Component of a sperm activating protein complex (SPAP), consisting of APOA1, an immunoglobulin heavy chain, an immunoglobulin light chain and albumin. Interacts with NDRG1. Interacts with SCGB3A2. Interacts with NAXE and YJEFN3. Post-translationally, glycosylated. Palmitoylated. In terms of processing, phosphorylation sites are present in the extracellular medium.

Its subcellular location is the secreted. Functionally, participates in the reverse transport of cholesterol from tissues to the liver for excretion by promoting cholesterol efflux from tissues and by acting as a cofactor for the lecithin cholesterol acyltransferase (LCAT). As part of the SPAP complex, activates spermatozoa motility. The sequence is that of Apolipoprotein A-I (APOA1) from Jaculus jaculus (Lesser Egyptian jerboa).